The following is a 572-amino-acid chain: uncharacterized protein (572 aa).

The interval 553–572 (PSPAPKPVTVRKKKGNSPIS) is disordered. Residues 561 to 572 (TVRKKKGNSPIS) show a composition bias toward basic residues.

This is an uncharacterized protein from Homo sapiens (Human).